We begin with the raw amino-acid sequence, 457 residues long: Hepatocyte nuclear factor 3-beta (457 aa).

The transactivation domain 1 stretch occupies residues D14–S93. Residues L106–L113 carry the Nuclear localization signal motif. T156 bears the Phosphothreonine mark. The segment at residues K159 to Q252 is a DNA-binding region (fork-head). S212 and S283 each carry phosphoserine. Positions A280 to G292 are enriched in low complexity. The interval A280 to K365 is disordered. The span at P298–P310 shows a compositional bias: polar residues. A Phosphothreonine modification is found at T301. Residues S303, S306, S307, and S309 each carry the phosphoserine modification. The segment covering P339 to P352 has biased composition (low complexity). A transactivation domain 2 region spans residues E361–S457. Phosphoserine occurs at positions 436 and 457.

In terms of assembly, binds DNA as a monomer. Binds TLE1. Interacts with FOXA1 and FOXA3. Interacts with PRKDC. Interacts with AKT1. Interacts with TET1; this interaction may recruit TET1 to specific genomic loci to mediate their demethylation. Post-translationally, phosphorylation on Thr-156 abolishes binding to target promoters and subsequent transcription activation upon insulin stimulation.

Its subcellular location is the nucleus. It localises to the cytoplasm. Functionally, transcription factor that is involved in embryonic development, establishment of tissue-specific gene expression and regulation of gene expression in differentiated tissues. Is thought to act as a 'pioneer' factor opening the compacted chromatin for other proteins through interactions with nucleosomal core histones and thereby replacing linker histones at target enhancer and/or promoter sites. Binds DNA with the consensus sequence 5'-[AC]A[AT]T[AG]TT[GT][AG][CT]T[CT]-3'. In embryonic development is required for notochord formation. Involved in the development of multiple endoderm-derived organ systems such as the liver, pancreas and lungs; FOXA1 and FOXA2 seem to have at least in part redundant roles. Originally described as a transcription activator for a number of liver genes such as AFP, albumin, tyrosine aminotransferase, PEPCK, etc. Interacts with the cis-acting regulatory regions of these genes. Involved in glucose homeostasis; regulates the expression of genes important for glucose sensing in pancreatic beta-cells and glucose homeostasis. Involved in regulation of fat metabolism. Binds to fibrinogen beta promoter and is involved in IL6-induced fibrinogen beta transcriptional activation. The polypeptide is Hepatocyte nuclear factor 3-beta (FOXA2) (Homo sapiens (Human)).